Consider the following 168-residue polypeptide: Large ribosomal subunit protein uL16 (168 aa).

This sequence belongs to the universal ribosomal protein uL16 family.

The sequence is that of Large ribosomal subunit protein uL16 from Thermofilum pendens (strain DSM 2475 / Hrk 5).